The following is a 133-amino-acid chain: Small ribosomal subunit protein uS11 (133 aa).

It belongs to the universal ribosomal protein uS11 family. Part of the 30S ribosomal subunit. Interacts with proteins S7 and S18. Binds to IF-3.

Its function is as follows. Located on the platform of the 30S subunit, it bridges several disparate RNA helices of the 16S rRNA. Forms part of the Shine-Dalgarno cleft in the 70S ribosome. In Ralstonia pickettii (strain 12J), this protein is Small ribosomal subunit protein uS11.